Reading from the N-terminus, the 457-residue chain is ATP synthase subunit beta (457 aa).

Gly-147–Thr-154 is a binding site for ATP.

It belongs to the ATPase alpha/beta chains family. F-type ATPases have 2 components, CF(1) - the catalytic core - and CF(0) - the membrane proton channel. CF(1) has five subunits: alpha(3), beta(3), gamma(1), delta(1), epsilon(1). CF(0) has three main subunits: a(1), b(2) and c(9-12). The alpha and beta chains form an alternating ring which encloses part of the gamma chain. CF(1) is attached to CF(0) by a central stalk formed by the gamma and epsilon chains, while a peripheral stalk is formed by the delta and b chains.

Its subcellular location is the cell inner membrane. It catalyses the reaction ATP + H2O + 4 H(+)(in) = ADP + phosphate + 5 H(+)(out). Its function is as follows. Produces ATP from ADP in the presence of a proton gradient across the membrane. The catalytic sites are hosted primarily by the beta subunits. The polypeptide is ATP synthase subunit beta (Haemophilus influenzae (strain PittGG)).